The sequence spans 341 residues: L-threonine 3-dehydrogenase (341 aa).

Residue cysteine 38 participates in Zn(2+) binding. Residues threonine 40 and histidine 43 each act as charge relay system in the active site. Histidine 63, glutamate 64, cysteine 93, cysteine 96, cysteine 99, and cysteine 107 together coordinate Zn(2+). NAD(+)-binding positions include isoleucine 175, aspartate 195, arginine 200, 262 to 264 (LGI), and 286 to 287 (IY).

It belongs to the zinc-containing alcohol dehydrogenase family. In terms of assembly, homotetramer. Zn(2+) is required as a cofactor.

The protein localises to the cytoplasm. The catalysed reaction is L-threonine + NAD(+) = (2S)-2-amino-3-oxobutanoate + NADH + H(+). It functions in the pathway amino-acid degradation; L-threonine degradation via oxydo-reductase pathway; glycine from L-threonine: step 1/2. Its function is as follows. Catalyzes the NAD(+)-dependent oxidation of L-threonine to 2-amino-3-ketobutyrate. The chain is L-threonine 3-dehydrogenase from Pseudoalteromonas translucida (strain TAC 125).